A 259-amino-acid polypeptide reads, in one-letter code: Pre-mRNA-splicing factor CWC24 (259 aa).

Residues 1 to 67 (MFRKRLVNKS…HENEGKLQKK (67 aa)) form a disordered region. Positions 25-39 (FSEEKLVASDEEKGS) are enriched in basic and acidic residues. Residue S33 is modified to Phosphoserine. Polar residues predominate over residues 47–57 (KSGNSRTLQLS). A compositionally biased stretch (basic and acidic residues) spans 58 to 67 (HENEGKLQKK). S105 bears the Phosphoserine mark. A C3H1-type zinc finger spans residues 138 to 166 (DFQPDVCKDYKQTGYCGYGDSCKFLHSRD). The RING-type zinc finger occupies 199–237 (CTLCKEDYKSPVVTNCGHYFCGSCFAKDMKKGTKCFICH).

The protein belongs to the CWC24 family. As to quaternary structure, belongs to the CWC complex (or CEF1-associated complex), a spliceosome sub-complex reminiscent of a late-stage spliceosome composed of the U2, U5 and U6 snRNAs and at least BUD13, BUD31, BRR2, CDC40, CEF1, CLF1, CUS1, CWC2, CWC15, CWC21, CWC22, CWC23, CWC24, CWC25, CWC27, ECM2, HSH155, IST3, ISY1, LEA1, MSL1, NTC20, PRP8, PRP9, PRP11, PRP19, PRP21, PRP22, PRP45, PRP46, SLU7, SMB1, SMD1, SMD2, SMD3, SMX2, SMX3, SNT309, SNU114, SPP2, SYF1, SYF2, RSE1 and YJU2.

It is found in the nucleus. Functionally, involved in pre-mRNA splicing. The polypeptide is Pre-mRNA-splicing factor CWC24 (CWC24) (Saccharomyces cerevisiae (strain ATCC 204508 / S288c) (Baker's yeast)).